Reading from the N-terminus, the 580-residue chain is DNA ligase 1 (580 aa).

Glu245 contacts ATP. The active-site N6-AMP-lysine intermediate is Lys247. The ATP site is built by Arg252, Arg267, Glu297, Phe343, Arg420, and Lys426.

Belongs to the ATP-dependent DNA ligase family. Mg(2+) serves as cofactor.

The catalysed reaction is ATP + (deoxyribonucleotide)n-3'-hydroxyl + 5'-phospho-(deoxyribonucleotide)m = (deoxyribonucleotide)n+m + AMP + diphosphate.. Its function is as follows. DNA ligase that seals nicks in double-stranded DNA during DNA replication, DNA recombination and DNA repair. The protein is DNA ligase 1 of Methanosarcina acetivorans (strain ATCC 35395 / DSM 2834 / JCM 12185 / C2A).